Reading from the N-terminus, the 220-residue chain is Iron-sulfur cluster repair protein YtfE (220 aa).

Belongs to the RIC family. YtfE subfamily. In terms of assembly, homodimer.

It is found in the cytoplasm. In terms of biological role, di-iron-containing protein involved in the repair of iron-sulfur clusters damaged by oxidative and nitrosative stress conditions. This is Iron-sulfur cluster repair protein YtfE from Citrobacter koseri (strain ATCC BAA-895 / CDC 4225-83 / SGSC4696).